We begin with the raw amino-acid sequence, 200 residues long: Glutathione S-transferase domain-containing protein DDB_G0273153/DDB_G0273923 (200 aa).

Positions 1 to 71 (MISSIYIFKI…YISNNHNFSG (71 aa)) constitute a GST N-terminal domain. A GST C-terminal domain is found at 73–195 (SLQESARVDD…INSNNINSQS (123 aa)).

The protein belongs to the GST superfamily.

The polypeptide is Glutathione S-transferase domain-containing protein DDB_G0273153/DDB_G0273923 (Dictyostelium discoideum (Social amoeba)).